Reading from the N-terminus, the 459-residue chain is Bifunctional protein GlmU (459 aa).

Residues methionine 1–arginine 229 are pyrophosphorylase. Residues leucine 8–glycine 11, lysine 22, glutamine 72, and glycine 77–threonine 78 each bind UDP-N-acetyl-alpha-D-glucosamine. Aspartate 102 contacts Mg(2+). UDP-N-acetyl-alpha-D-glucosamine-binding residues include glycine 139, glutamate 154, asparagine 169, and asparagine 227. Asparagine 227 contributes to the Mg(2+) binding site. A linker region spans residues valine 230–asparagine 250. The tract at residues glycine 251–lysine 459 is N-acetyltransferase. UDP-N-acetyl-alpha-D-glucosamine contacts are provided by arginine 332 and lysine 350. Histidine 362 functions as the Proton acceptor in the catalytic mechanism. Residues tyrosine 365 and asparagine 376 each coordinate UDP-N-acetyl-alpha-D-glucosamine. Acetyl-CoA is bound by residues alanine 379, asparagine 385–tyrosine 386, serine 404, alanine 422, and arginine 439.

This sequence in the N-terminal section; belongs to the N-acetylglucosamine-1-phosphate uridyltransferase family. It in the C-terminal section; belongs to the transferase hexapeptide repeat family. As to quaternary structure, homotrimer. Requires Mg(2+) as cofactor.

It localises to the cytoplasm. It carries out the reaction alpha-D-glucosamine 1-phosphate + acetyl-CoA = N-acetyl-alpha-D-glucosamine 1-phosphate + CoA + H(+). The enzyme catalyses N-acetyl-alpha-D-glucosamine 1-phosphate + UTP + H(+) = UDP-N-acetyl-alpha-D-glucosamine + diphosphate. The protein operates within nucleotide-sugar biosynthesis; UDP-N-acetyl-alpha-D-glucosamine biosynthesis; N-acetyl-alpha-D-glucosamine 1-phosphate from alpha-D-glucosamine 6-phosphate (route II): step 2/2. It participates in nucleotide-sugar biosynthesis; UDP-N-acetyl-alpha-D-glucosamine biosynthesis; UDP-N-acetyl-alpha-D-glucosamine from N-acetyl-alpha-D-glucosamine 1-phosphate: step 1/1. Its pathway is bacterial outer membrane biogenesis; LPS lipid A biosynthesis. Catalyzes the last two sequential reactions in the de novo biosynthetic pathway for UDP-N-acetylglucosamine (UDP-GlcNAc). The C-terminal domain catalyzes the transfer of acetyl group from acetyl coenzyme A to glucosamine-1-phosphate (GlcN-1-P) to produce N-acetylglucosamine-1-phosphate (GlcNAc-1-P), which is converted into UDP-GlcNAc by the transfer of uridine 5-monophosphate (from uridine 5-triphosphate), a reaction catalyzed by the N-terminal domain. The polypeptide is Bifunctional protein GlmU (Streptococcus agalactiae serotype III (strain NEM316)).